Reading from the N-terminus, the 121-residue chain is Ribonuclease P protein component (121 aa).

The protein belongs to the RnpA family. In terms of assembly, consists of a catalytic RNA component (M1 or rnpB) and a protein subunit.

The catalysed reaction is Endonucleolytic cleavage of RNA, removing 5'-extranucleotides from tRNA precursor.. In terms of biological role, RNaseP catalyzes the removal of the 5'-leader sequence from pre-tRNA to produce the mature 5'-terminus. It can also cleave other RNA substrates such as 4.5S RNA. The protein component plays an auxiliary but essential role in vivo by binding to the 5'-leader sequence and broadening the substrate specificity of the ribozyme. The protein is Ribonuclease P protein component of Desulfosudis oleivorans (strain DSM 6200 / JCM 39069 / Hxd3) (Desulfococcus oleovorans).